The chain runs to 289 residues: Inorganic pyrophosphatase (289 aa).

Ser2 carries the post-translational modification N-acetylserine. Lys57 is modified (N6-acetyllysine). Mg(2+)-binding residues include Asp116, Asp121, and Asp153. Lys228 bears the N6-acetyllysine mark. Ser250 carries the post-translational modification Phosphoserine.

The protein belongs to the PPase family. As to quaternary structure, homodimer. Mg(2+) is required as a cofactor. In terms of tissue distribution, expressed ubiquitously.

Its subcellular location is the cytoplasm. It catalyses the reaction diphosphate + H2O = 2 phosphate + H(+). The chain is Inorganic pyrophosphatase (PPA1) from Homo sapiens (Human).